Reading from the N-terminus, the 215-residue chain is Pyrrolidone-carboxylate peptidase (215 aa).

Active-site residues include E78, C141, and H165.

The protein belongs to the peptidase C15 family. In terms of assembly, homotetramer.

It is found in the cytoplasm. The enzyme catalyses Release of an N-terminal pyroglutamyl group from a polypeptide, the second amino acid generally not being Pro.. Removes 5-oxoproline from various penultimate amino acid residues except L-proline. This chain is Pyrrolidone-carboxylate peptidase (pcp), found in Streptococcus pyogenes serotype M1.